The sequence spans 258 residues: Regulatory protein RecX (258 aa).

It belongs to the RecX family.

Its subcellular location is the cytoplasm. Functionally, modulates RecA activity. In Streptococcus gordonii (strain Challis / ATCC 35105 / BCRC 15272 / CH1 / DL1 / V288), this protein is Regulatory protein RecX.